The sequence spans 128 residues: DNA-directed RNA polymerase subunit omega (128 aa).

The interval 87-106 (ARSSQAAPKSAPGQEIGKSF) is disordered.

Belongs to the RNA polymerase subunit omega family. As to quaternary structure, the RNAP catalytic core consists of 2 alpha, 1 beta, 1 beta' and 1 omega subunit. When a sigma factor is associated with the core the holoenzyme is formed, which can initiate transcription.

The enzyme catalyses RNA(n) + a ribonucleoside 5'-triphosphate = RNA(n+1) + diphosphate. Its function is as follows. Promotes RNA polymerase assembly. Latches the N- and C-terminal regions of the beta' subunit thereby facilitating its interaction with the beta and alpha subunits. This is DNA-directed RNA polymerase subunit omega from Anaplasma marginale (strain St. Maries).